We begin with the raw amino-acid sequence, 61 residues long: Large ribosomal subunit protein bL28A (61 aa).

Belongs to the bacterial ribosomal protein bL28 family.

The polypeptide is Large ribosomal subunit protein bL28A (rpmB1) (Streptomyces coelicolor (strain ATCC BAA-471 / A3(2) / M145)).